Consider the following 195-residue polypeptide: Imidazoleglycerol-phosphate dehydratase (195 aa).

The protein belongs to the imidazoleglycerol-phosphate dehydratase family.

It localises to the cytoplasm. It carries out the reaction D-erythro-1-(imidazol-4-yl)glycerol 3-phosphate = 3-(imidazol-4-yl)-2-oxopropyl phosphate + H2O. It participates in amino-acid biosynthesis; L-histidine biosynthesis; L-histidine from 5-phospho-alpha-D-ribose 1-diphosphate: step 6/9. This Geobacillus thermodenitrificans (strain NG80-2) protein is Imidazoleglycerol-phosphate dehydratase.